The following is a 358-amino-acid chain: Membrane-bound lytic murein transglycosylase C (358 aa).

A signal peptide spans 1 to 16 (MKKILALLVIAPLLIS). Cys-17 carries the N-palmitoyl cysteine lipid modification. The S-diacylglycerol cysteine moiety is linked to residue Cys-17.

The protein belongs to the transglycosylase Slt family.

Its subcellular location is the cell outer membrane. The catalysed reaction is Exolytic cleavage of the (1-&gt;4)-beta-glycosidic linkage between N-acetylmuramic acid (MurNAc) and N-acetylglucosamine (GlcNAc) residues in peptidoglycan, from either the reducing or the non-reducing ends of the peptidoglycan chains, with concomitant formation of a 1,6-anhydrobond in the MurNAc residue.. Murein-degrading enzyme. May play a role in recycling of muropeptides during cell elongation and/or cell division. This chain is Membrane-bound lytic murein transglycosylase C, found in Serratia proteamaculans (strain 568).